The primary structure comprises 308 residues: Ornithine carbamoyltransferase (308 aa).

Residues Arg103 and 130–133 (HPAQ) contribute to the carbamoyl phosphate site. Residues Asn162, Asp221, and 225-226 (SM) contribute to the L-ornithine site. Carbamoyl phosphate-binding positions include 261–262 (CL) and Arg289.

The protein belongs to the aspartate/ornithine carbamoyltransferase superfamily. OTCase family.

It localises to the cytoplasm. It catalyses the reaction carbamoyl phosphate + L-ornithine = L-citrulline + phosphate + H(+). It participates in amino-acid biosynthesis; L-arginine biosynthesis; L-arginine from L-ornithine and carbamoyl phosphate: step 1/3. Reversibly catalyzes the transfer of the carbamoyl group from carbamoyl phosphate (CP) to the N(epsilon) atom of ornithine (ORN) to produce L-citrulline. This is Ornithine carbamoyltransferase from Deinococcus radiodurans (strain ATCC 13939 / DSM 20539 / JCM 16871 / CCUG 27074 / LMG 4051 / NBRC 15346 / NCIMB 9279 / VKM B-1422 / R1).